The following is a 312-amino-acid chain: Zygote arrest protein 1.L (312 aa).

Disordered regions lie at residues 79-133 (RDVG…VRFP) and 150-205 (FQDK…DQTR). 2 stretches are compositionally biased toward polar residues: residues 86 to 95 (NPRQDASVQC) and 113 to 128 (PQQSPPEQGSPASPTK). Residues 152 to 196 (DKGENLSEKTEALRSEGSRGEGGRPEGKQEDGEIKEQTKMDKADQ) show a composition bias toward basic and acidic residues. The 3CxxC-type zinc-finger motif lies at 214–297 (KYGYYHCKDC…RQDLCGRCKG (84 aa)).

It belongs to the ZAR1 family. In terms of tissue distribution, ovary.

It is found in the cytoplasm. The protein resides in the cytoplasmic ribonucleoprotein granule. In terms of biological role, mRNA-binding protein required for maternal mRNA storage, translation and degradation during oocyte maturation. Probably promotes formation of some phase-separated membraneless compartment that stores maternal mRNAs in oocytes: acts by undergoing liquid-liquid phase separation upon binding to maternal mRNAs. Binds to the 3'-UTR of maternal mRNAs in immature oocytes, inhibiting their translation. In Xenopus laevis (African clawed frog), this protein is Zygote arrest protein 1.L.